The chain runs to 520 residues: Probable protein phosphatase 2C 39 (520 aa).

Positions 160–507 (FLTSTEIKMA…DDVTIIVIIL (348 aa)) constitute a PPM-type phosphatase domain. Mn(2+) contacts are provided by aspartate 195, glycine 196, aspartate 435, and aspartate 498.

It belongs to the PP2C family. It depends on Mg(2+) as a cofactor. Mn(2+) serves as cofactor.

The enzyme catalyses O-phospho-L-seryl-[protein] + H2O = L-seryl-[protein] + phosphate. It carries out the reaction O-phospho-L-threonyl-[protein] + H2O = L-threonyl-[protein] + phosphate. This Oryza sativa subsp. japonica (Rice) protein is Probable protein phosphatase 2C 39.